A 207-amino-acid chain; its full sequence is Small ribosomal subunit protein uS4 (207 aa).

The segment covering 31–40 (KCRLDNKPGQ) has biased composition (basic and acidic residues). A disordered region spans residues 31 to 56 (KCRLDNKPGQDGRTSGSRTSDYGNQL). A compositionally biased stretch (polar residues) spans 42–53 (GRTSGSRTSDYG). One can recognise an S4 RNA-binding domain in the interval 97–158 (SRLDNVVYRM…KAKKQARITE (62 aa)).

Belongs to the universal ribosomal protein uS4 family. As to quaternary structure, part of the 30S ribosomal subunit. Contacts protein S5. The interaction surface between S4 and S5 is involved in control of translational fidelity.

One of the primary rRNA binding proteins, it binds directly to 16S rRNA where it nucleates assembly of the body of the 30S subunit. In terms of biological role, with S5 and S12 plays an important role in translational accuracy. The sequence is that of Small ribosomal subunit protein uS4 from Polynucleobacter necessarius subsp. necessarius (strain STIR1).